A 1161-amino-acid polypeptide reads, in one-letter code: DNA-directed RNA polymerase subunit beta' (1161 aa).

Cys60, Cys62, Cys75, and Cys78 together coordinate Zn(2+). Mg(2+) contacts are provided by Asp449, Asp451, and Asp453. 4 residues coordinate Zn(2+): Cys790, Cys864, Cys871, and Cys874.

The protein belongs to the RNA polymerase beta' chain family. The RNAP catalytic core consists of 2 alpha, 1 beta, 1 beta' and 1 omega subunit. When a sigma factor is associated with the core the holoenzyme is formed, which can initiate transcription. Mg(2+) is required as a cofactor. Zn(2+) serves as cofactor.

It catalyses the reaction RNA(n) + a ribonucleoside 5'-triphosphate = RNA(n+1) + diphosphate. In terms of biological role, DNA-dependent RNA polymerase catalyzes the transcription of DNA into RNA using the four ribonucleoside triphosphates as substrates. This is DNA-directed RNA polymerase subunit beta' from Clostridioides difficile (strain 630) (Peptoclostridium difficile).